A 180-amino-acid chain; its full sequence is Large ribosomal subunit protein uL6 (180 aa).

Belongs to the universal ribosomal protein uL6 family. Part of the 50S ribosomal subunit.

Functionally, this protein binds to the 23S rRNA, and is important in its secondary structure. It is located near the subunit interface in the base of the L7/L12 stalk, and near the tRNA binding site of the peptidyltransferase center. The protein is Large ribosomal subunit protein uL6 of Picrophilus torridus (strain ATCC 700027 / DSM 9790 / JCM 10055 / NBRC 100828 / KAW 2/3).